The following is a 299-amino-acid chain: Trans-aconitate 3-methyltransferase (299 aa).

Ser2 carries the post-translational modification N-acetylserine.

The protein belongs to the methyltransferase superfamily. Tam family.

It is found in the cytoplasm. It catalyses the reaction trans-aconitate + S-adenosyl-L-methionine = (E)-2-(methoxycarbonylmethyl)but-2-enedioate + S-adenosyl-L-homocysteine. Catalyzes the S-adenosylmethionine monomethyl esterification of trans-aconitate and 3-isopropylmalate at high affinity and of other molecules like cis-aconitate, isocitrate, and citrate at lower velocities and affinities. The function of trans-aconitate methylation appears to be in reducing the toxicity of this spontaneous breakdown product of cis-aconitate. The role of 3-isopropylmalate methylation is unclear but may represent a metabolic branch at 3-isopropylmalate, where some of the material is taken in the pathway leading to leucine and some is taken in a pathway to the 3-isopropylmalate methyl ester, a molecule that provides a signal to switch from vegetative to invasive growth in response to amino acid starvation. This Saccharomyces cerevisiae (strain ATCC 204508 / S288c) (Baker's yeast) protein is Trans-aconitate 3-methyltransferase (TMT1).